Here is a 102-residue protein sequence, read N- to C-terminus: Large ribosomal subunit protein uL24 (102 aa).

It belongs to the universal ribosomal protein uL24 family. In terms of assembly, part of the 50S ribosomal subunit.

One of two assembly initiator proteins, it binds directly to the 5'-end of the 23S rRNA, where it nucleates assembly of the 50S subunit. Functionally, one of the proteins that surrounds the polypeptide exit tunnel on the outside of the subunit. This Finegoldia magna (strain ATCC 29328 / DSM 20472 / WAL 2508) (Peptostreptococcus magnus) protein is Large ribosomal subunit protein uL24.